The primary structure comprises 156 residues: Peptide deformylase 1 (156 aa).

The Fe cation site is built by Cys-90 and His-132. Glu-133 is an active-site residue. His-136 is a binding site for Fe cation.

The protein belongs to the polypeptide deformylase family. It depends on Fe(2+) as a cofactor.

The catalysed reaction is N-terminal N-formyl-L-methionyl-[peptide] + H2O = N-terminal L-methionyl-[peptide] + formate. In terms of biological role, removes the formyl group from the N-terminal Met of newly synthesized proteins. Requires at least a dipeptide for an efficient rate of reaction. N-terminal L-methionine is a prerequisite for activity but the enzyme has broad specificity at other positions. This chain is Peptide deformylase 1, found in Bacillus cereus (strain ATCC 14579 / DSM 31 / CCUG 7414 / JCM 2152 / NBRC 15305 / NCIMB 9373 / NCTC 2599 / NRRL B-3711).